A 327-amino-acid polypeptide reads, in one-letter code: Probable cell division protein WhiA (327 aa).

Positions 275 to 308 form a DNA-binding region, H-T-H motif; the sequence is SLEELGRLADPPMTKDAVAGRIRRLLSMADRKAK.

The protein belongs to the WhiA family.

Its function is as follows. Involved in cell division and chromosome segregation. This Mycobacterium leprae (strain Br4923) protein is Probable cell division protein WhiA.